The sequence spans 213 residues: Pyrrolidone-carboxylate peptidase (213 aa).

Active-site residues include Glu-78, Cys-141, and His-165.

It belongs to the peptidase C15 family. Homotetramer.

It is found in the cytoplasm. It carries out the reaction Release of an N-terminal pyroglutamyl group from a polypeptide, the second amino acid generally not being Pro.. Removes 5-oxoproline from various penultimate amino acid residues except L-proline. This is Pyrrolidone-carboxylate peptidase from Alkaliphilus oremlandii (strain OhILAs) (Clostridium oremlandii (strain OhILAs)).